Here is a 116-residue protein sequence, read N- to C-terminus: Large ribosomal subunit protein bL17 (116 aa).

The protein belongs to the bacterial ribosomal protein bL17 family. As to quaternary structure, part of the 50S ribosomal subunit. Contacts protein L32.

The protein is Large ribosomal subunit protein bL17 of Wolinella succinogenes (strain ATCC 29543 / DSM 1740 / CCUG 13145 / JCM 31913 / LMG 7466 / NCTC 11488 / FDC 602W) (Vibrio succinogenes).